Consider the following 320-residue polypeptide: Cytochrome f (320 aa).

The signal sequence occupies residues 1-35 (MQNRKTFSWVKEQMTRSIYVSIMIYVITRASISNA). Residues Y36, C56, C59, and H60 each coordinate heme. A helical membrane pass occupies residues 286–306 (VQGLLFFLASVILAQIFLVLK).

This sequence belongs to the cytochrome f family. As to quaternary structure, the 4 large subunits of the cytochrome b6-f complex are cytochrome b6, subunit IV (17 kDa polypeptide, petD), cytochrome f and the Rieske protein, while the 4 small subunits are PetG, PetL, PetM and PetN. The complex functions as a dimer. Requires heme as cofactor.

The protein localises to the plastid. Its subcellular location is the chloroplast thylakoid membrane. Functionally, component of the cytochrome b6-f complex, which mediates electron transfer between photosystem II (PSII) and photosystem I (PSI), cyclic electron flow around PSI, and state transitions. The chain is Cytochrome f from Phalaenopsis aphrodite subsp. formosana (Moth orchid).